We begin with the raw amino-acid sequence, 137 residues long: Large ribosomal subunit protein uL16 (137 aa).

Positions 1–21 (MLSPKKVKFRKRQKGRLKGKA) are enriched in basic residues. The interval 1-22 (MLSPKKVKFRKRQKGRLKGKAQ) is disordered.

Belongs to the universal ribosomal protein uL16 family. Part of the 50S ribosomal subunit.

Binds 23S rRNA and is also seen to make contacts with the A and possibly P site tRNAs. The chain is Large ribosomal subunit protein uL16 from Maridesulfovibrio salexigens (strain ATCC 14822 / DSM 2638 / NCIMB 8403 / VKM B-1763) (Desulfovibrio salexigens).